A 215-amino-acid chain; its full sequence is Proteasome subunit beta type-1 (215 aa).

The residue at position 1 (M1) is an N-acetylmethionine. Positions 1-19 are cleaved as a propeptide — removed in mature form; that stretch reads MNGIQVDINRLKKGEVSLG. Catalysis depends on T20, which acts as the Nucleophile.

The protein belongs to the peptidase T1B family. In terms of assembly, the 26S proteasome consists of a 20S proteasome core and two 19S regulatory subunits. The 20S proteasome core is composed of 28 subunits that are arranged in four stacked rings, resulting in a barrel-shaped structure. The two end rings are each formed by seven alpha subunits, and the two central rings are each formed by seven beta subunits. The catalytic chamber with the active sites is on the inside of the barrel.

The protein resides in the cytoplasm. Its subcellular location is the nucleus. It carries out the reaction Cleavage of peptide bonds with very broad specificity.. Its function is as follows. The proteasome degrades poly-ubiquitinated proteins in the cytoplasm and in the nucleus. It is essential for the regulated turnover of proteins and for the removal of misfolded proteins. The proteasome is a multicatalytic proteinase complex that is characterized by its ability to cleave peptides with Arg, Phe, Tyr, Leu, and Glu adjacent to the leaving group at neutral or slightly basic pH. It has an ATP-dependent proteolytic activity. PRE3 and PRE4 are necessary for the peptidyl-glutamyl-peptide-hydrolyzing activity. This subunit is necessary for the peptidylglutamyl-peptide hydrolyzing activity. This chain is Proteasome subunit beta type-1 (PRE3), found in Saccharomyces cerevisiae (strain ATCC 204508 / S288c) (Baker's yeast).